The primary structure comprises 631 residues: Shootin-1 (631 aa).

N-acetylmethionine is present on Met-1. 2 positions are modified to phosphoserine: Ser-3 and Ser-4. Positions 7 to 353 (EKQLQLITSL…RVNQSENSVP (347 aa)) form a coiled coil. Ser-101 is modified (phosphoserine; by PAK1). Residue Ser-249 is modified to Phosphoserine. Disordered regions lie at residues 343–404 (KRVN…EVTD) and 417–508 (IKKG…KSMP). Residues 352 to 369 (VPPPPPPPPPLPPPPPNP) show a composition bias toward pro residues. A Phosphoserine modification is found at Ser-375. The span at 456-465 (LNKSTSSRSL) shows a compositional bias: polar residues. Position 473 is a phosphoserine (Ser-473). Phosphothreonine is present on Thr-487. Residues 490 to 505 (ADSSSPTGILATSESK) show a composition bias toward polar residues. Ser-494 bears the Phosphoserine mark. Phosphothreonine is present on Thr-496. Residues Ser-506 and Ser-515 each carry the phosphoserine modification. A disordered region spans residues 530-631 (FNNPCPLTPE…KTGETDSSNC (102 aa)). At Thr-537 the chain carries Phosphothreonine. Residues 590–602 (PQTKDQAAEKDPT) are compositionally biased toward basic and acidic residues.

It belongs to the shootin family. As to quaternary structure, interacts with L1CAM; this interaction occurs at axonal growth cones. Interacts with actin filament retrograde flow; this interaction is enhanced in a netrin-1- and PAK1-dependent manner and promotes F-actin-substrate coupling and concomitant formation of traction forces at axonal growth cones. Interacts with RUFY3. Interacts with PFN2. Interacts (via N-terminus) with KIF20B; this interaction is direct and promotes the association of SHTN1 to microtubules in primary neurons. Associates with microtubule. Phosphorylated on Ser-101 and Ser-249 by PAK1 through a CDC42- and RAC1-dependent signaling pathway, which enhances its association with F-actin retrograde flow in filopodia and lamellipodia of axonal growth cones. Phosphorylation on Ser-101 and Ser-249 is increased by netrin-1. Expressed in hippocampal neurons.

It localises to the perikaryon. The protein resides in the cell projection. The protein localises to the axon. Its subcellular location is the growth cone. It is found in the cytoplasm. It localises to the cytoskeleton. The protein resides in the filopodium. The protein localises to the lamellipodium. Its function is as follows. Involved in the generation of internal asymmetric signals required for neuronal polarization and neurite outgrowth. Mediates netrin-1-induced F-actin-substrate coupling or 'clutch engagement' within the axon growth cone through activation of CDC42, RAC1 and PAK1-dependent signaling pathway, thereby converting the F-actin retrograde flow into traction forces, concomitantly with filopodium extension and axon outgrowth. Plays a role in cytoskeletal organization by regulating the subcellular localization of phosphoinositide 3-kinase (PI3K) activity at the axonal growth cone. Also plays a role in regenerative neurite outgrowth. In the developing cortex, cooperates with KIF20B to promote both the transition from the multipolar to the bipolar stage and the radial migration of cortical neurons from the ventricular zone toward the superficial layer of the neocortex. Involved in the accumulation of phosphatidylinositol 3,4,5-trisphosphate (PIP3) in the growth cone of primary hippocampal neurons. In Mus musculus (Mouse), this protein is Shootin-1.